Reading from the N-terminus, the 250-residue chain is Probable 2' cyclic ADP-D-ribose synthase TcpB (250 aa).

The interval M1–K46 is disordered. The tract at residues M1–E117 is necessary and sufficient for phosphoinositide binding. Residues A14–S23 show a composition bias toward low complexity. The segment covering K30–R39 has biased composition (basic and acidic residues). The region spanning E117–I250 is the TIR domain. The active site involves E192.

In terms of assembly, homodimer; may also form oligomers. Interacts with host TIRAP. Interacts with host MYD88. Interaction with host MYD88 was not confirmed by another study. Interacts with host TLR4. Abolishes the interaction of host TIRAP with TLR4.

Its subcellular location is the secreted. The protein resides in the host cell membrane. The enzyme catalyses NAD(+) + H2O = ADP-D-ribose + nicotinamide + H(+). It carries out the reaction NAD(+) = 2'cADPR + nicotinamide + H(+). Its function is as follows. Virulence factor that interferes with host Toll-like receptor 2 (TLR2) and TLR4 signaling, resulting in the reduction of dendritic cell maturation, inhibition of pro-inflammatory cytokine secretion and impaired NF-kappa-B activation in macrophages. Interferes with host TLR4 signaling by abolishing host TLR4-TIRAP interaction (but not host TIRAP-MYD88 interaction) and its downstream signaling. Inhibits host TLR 2 induced NF-kappa-B activation and TNF (tumor necrosis factor) secretion. Binds phosphoinositide (PtdIns) via its N-terminal domain. Has NAD(+) hydrolase (NADase) activity, catalyzes cleavage of NAD(+) into ADP-D-ribose (ADPR) and nicotinamide. Also generates a cyclization variant of cyclic ADPR (cADPR), termed v-cADPR (probably 2'cADPR). The sequence is that of Probable 2' cyclic ADP-D-ribose synthase TcpB from Brucella melitensis biotype 1 (strain ATCC 23456 / CCUG 17765 / NCTC 10094 / 16M).